We begin with the raw amino-acid sequence, 274 residues long: Dermonecrotic toxin SdSicTox-betaIIB1ai (274 aa).

The active site involves histidine 5. Mg(2+)-binding residues include glutamate 25 and aspartate 27. The Nucleophile role is filled by histidine 41. Disulfide bonds link cysteine 45/cysteine 51 and cysteine 47/cysteine 190. Aspartate 85 is a binding site for Mg(2+).

The protein belongs to the arthropod phospholipase D family. Class II subfamily. Requires Mg(2+) as cofactor. Expressed by the venom gland.

Its subcellular location is the secreted. It carries out the reaction an N-(acyl)-sphingosylphosphocholine = an N-(acyl)-sphingosyl-1,3-cyclic phosphate + choline. It catalyses the reaction an N-(acyl)-sphingosylphosphoethanolamine = an N-(acyl)-sphingosyl-1,3-cyclic phosphate + ethanolamine. The catalysed reaction is a 1-acyl-sn-glycero-3-phosphocholine = a 1-acyl-sn-glycero-2,3-cyclic phosphate + choline. The enzyme catalyses a 1-acyl-sn-glycero-3-phosphoethanolamine = a 1-acyl-sn-glycero-2,3-cyclic phosphate + ethanolamine. Dermonecrotic toxins cleave the phosphodiester linkage between the phosphate and headgroup of certain phospholipids (sphingolipid and lysolipid substrates), forming an alcohol (often choline) and a cyclic phosphate. This toxin acts on sphingomyelin (SM). It may also act on ceramide phosphoethanolamine (CPE), lysophosphatidylcholine (LPC) and lysophosphatidylethanolamine (LPE), but not on lysophosphatidylserine (LPS), and lysophosphatidylglycerol (LPG). It acts by transphosphatidylation, releasing exclusively cyclic phosphate products as second products. Induces dermonecrosis, hemolysis, increased vascular permeability, edema, inflammatory response, and platelet aggregation. This Sicarius cf. damarensis (strain GJB-2008) (Six-eyed sand spider) protein is Dermonecrotic toxin SdSicTox-betaIIB1ai.